A 355-amino-acid chain; its full sequence is MTEAIIDLKDIAVTFDDGHQVVHAVQDVNLQIQTGDIYGIIGYSGAGKSTLVRVINLLQSPTTGQVVVNGQALQTLSPAALRQARKHVGMIFQHFNLMQSRTVMGNVIYPLLGQKISKQNRRAKALRLLKLVGLTDYAQTYPDKLSGGQKQRVAIARALVTDPQILISDEATSALDPKTTTAILELLQRVNRELGITIVLITHEMQVIKSICHHVAVMADGRIIERGPVAEVFTAPKAPLTVDFVETSTNVRAAIQRITKTIKLSELAAGQELIAFKFVGQSTKQGIVSQLSQTLGVDVNILFANIDQIDGQNVGDMIAIITGDLTAFNAAVTNMSAQGVHTRIINEEVVKGMVD.

The region spanning 6 to 245 (IDLKDIAVTF…PKAPLTVDFV (240 aa)) is the ABC transporter domain. 42–49 (GYSGAGKS) serves as a coordination point for ATP.

It belongs to the ABC transporter superfamily. Methionine importer (TC 3.A.1.24) family. As to quaternary structure, the complex is composed of two ATP-binding proteins (MetN), two transmembrane proteins (MetI) and a solute-binding protein (MetQ).

The protein localises to the cell membrane. It carries out the reaction L-methionine(out) + ATP + H2O = L-methionine(in) + ADP + phosphate + H(+). The enzyme catalyses D-methionine(out) + ATP + H2O = D-methionine(in) + ADP + phosphate + H(+). In terms of biological role, part of the ABC transporter complex MetNIQ involved in methionine import. Responsible for energy coupling to the transport system. The sequence is that of Methionine import ATP-binding protein MetN 1 from Lactiplantibacillus plantarum (strain ATCC BAA-793 / NCIMB 8826 / WCFS1) (Lactobacillus plantarum).